Consider the following 392-residue polypeptide: Chaperone protein DnaJ (392 aa).

Residues 5-75 (DYYEVLGIDK…QKKQQYDQFG (71 aa)) enclose the J domain. The segment at 148-229 (GVEKTIKYKR…CHGTGTAKET (82 aa)) adopts a CR-type zinc-finger fold. Positions 161, 164, 177, 180, 203, 206, 217, and 220 each coordinate Zn(2+). CXXCXGXG motif repeat units follow at residues 161–168 (CENCHGTG), 177–184 (CPTCNGQG), 203–210 (CPDCHGTG), and 217–224 (CKHCHGTG).

Belongs to the DnaJ family. In terms of assembly, homodimer. It depends on Zn(2+) as a cofactor.

The protein resides in the cytoplasm. Functionally, participates actively in the response to hyperosmotic and heat shock by preventing the aggregation of stress-denatured proteins and by disaggregating proteins, also in an autonomous, DnaK-independent fashion. Unfolded proteins bind initially to DnaJ; upon interaction with the DnaJ-bound protein, DnaK hydrolyzes its bound ATP, resulting in the formation of a stable complex. GrpE releases ADP from DnaK; ATP binding to DnaK triggers the release of the substrate protein, thus completing the reaction cycle. Several rounds of ATP-dependent interactions between DnaJ, DnaK and GrpE are required for fully efficient folding. Also involved, together with DnaK and GrpE, in the DNA replication of plasmids through activation of initiation proteins. The protein is Chaperone protein DnaJ of Fusobacterium nucleatum subsp. nucleatum (strain ATCC 25586 / DSM 15643 / BCRC 10681 / CIP 101130 / JCM 8532 / KCTC 2640 / LMG 13131 / VPI 4355).